The following is a 414-amino-acid chain: Secernin-1 (414 aa).

It belongs to the peptidase C69 family. Secernin subfamily.

Its subcellular location is the cytoplasm. Its function is as follows. Regulates exocytosis in mast cells. Increases both the extent of secretion and the sensitivity of mast cells to stimulation with calcium. In Mus musculus (Mouse), this protein is Secernin-1 (Scrn1).